Consider the following 553-residue polypeptide: Aminotransferase FUM8 (553 aa).

The signal sequence occupies residues 1–25 (MSPAPAILALRRVYNFCLLVDEAHG). An N-linked (GlcNAc...) asparagine glycan is attached at asparagine 480.

It belongs to the class-II pyridoxal-phosphate-dependent aminotransferase family. BioF subfamily. The cofactor is pyridoxal 5'-phosphate.

It localises to the endoplasmic reticulum. The protein operates within mycotoxin biosynthesis. Aminotransferase; part of the gene cluster that mediates the biosynthesis of fumonisins B1 (FB1), B2 (FB2), B3 (FB3), and B4 (FB4), which are carcinogenic mycotoxins. Within the pathway, FUM8 catalyzes the release of the C-18 polyketide chain from the highly reducing polyketide synthase FUM1 by a nucleophilic attack of a carbanion, which is derived from R-carbon of alanine by decarboxylation, on the carbonyl carbon of polyketide acyl chain. The biosynthesis starts with the FUM1-catalyzed carbon chain assembly from one molecule of acetyl-CoA, eight molecules of malonyl-CoA, and two molecules of methionine (in S-adenosyl form). The C18 polyketide chain is released from the enzyme by a nucleophilic attack of a carbanion, which is derived from R-carbon of alanine by decarboxylation, on the carbonyl carbon of polyketide acyl chain. This step is catalyzed by the pyridoxal 5'-phosphate-dependent aminoacyl transferase FUM8. The resultant 3-keto intermediate is then stereospecifically reduced to a 3-hydroxyl product by reductase FUM13. Subsequent oxidations at C-10 by the cytochrome P450 monooxygenase FUM2, C-14 and C-15 by FUM6, FUM12 or FUM15, tricarballylic esterification of the hydroxyl groups on C-14 and C-15 by acyltransferase FUM14, and C-5 hydroxylation by 2-keto-glutarate-dependent dioxygenase FUM3 furnish the biosynthesis of fumonisins. The tricarballylic moieties are most likely derived from the citric acid cycle, and their addition to the carbon backbone may involve FUM7, FUM10, FUM11 and FUM14. In Gibberella moniliformis (strain M3125 / FGSC 7600) (Maize ear and stalk rot fungus), this protein is Aminotransferase FUM8.